Here is a 587-residue protein sequence, read N- to C-terminus: Protoheme IX farnesyltransferase (587 aa).

The interval 1 to 317 (MAARSLMRIL…ISLTKPKVIS (317 aa)) is unknown. Transmembrane regions (helical) follow at residues 9–29 (ILLVGLGLTLATIISGALVTI), 58–78 (LLHRLFVALALLAVFAGLVAV), 93–113 (GIAAAFFLLQALAGALLVWGV), 123–143 (LSGALLAFGAQSLTIALIAVP), 172–192 (AAGVAALAIGARSVVPGFGMM), 195–215 (VPTNSVSAVGFAALLSVWMAL), 238–258 (SLFLPALALLALLGAFIPVAG), 260–280 (LISLTAIALLWAATIIAAVIL), 315–335 (VISLLLVTTLTTMFITEAGLP), 337–357 (WWLVIWTMIGGYLAAGGAGAI), 386–406 (AAFIFGLILSVLSIIVLWVFT), 409–429 (LAAFFALLGIIYYAWFYTGWL), 437–457 (IIIGGGAGAIPPLVGWTAVTG), 464–484 (VVLFAIIFYWTPPHFWALALV), 522–542 (LLPVAIGAMSWIYLIGAVVLG), and 560–580 (AIWGLYKYSLLYLALVFAAMV). Residues 318–587 (LLLVTTLTTM…AMVADRLIIG (270 aa)) are protoheme IX prenyltransferase.

In the C-terminal section; belongs to the UbiA prenyltransferase family. Protoheme IX farnesyltransferase subfamily.

It is found in the cell membrane. It catalyses the reaction heme b + (2E,6E)-farnesyl diphosphate + H2O = Fe(II)-heme o + diphosphate. It participates in porphyrin-containing compound metabolism; heme O biosynthesis; heme O from protoheme: step 1/1. In terms of biological role, converts heme B (protoheme IX) to heme O by substitution of the vinyl group on carbon 2 of heme B porphyrin ring with a hydroxyethyl farnesyl side group. The polypeptide is Protoheme IX farnesyltransferase (ctaB) (Chloroflexus aurantiacus (strain ATCC 29366 / DSM 635 / J-10-fl)).